The primary structure comprises 319 residues: Methionyl-tRNA formyltransferase (319 aa).

113–116 (SLLP) is a binding site for (6S)-5,6,7,8-tetrahydrofolate.

This sequence belongs to the Fmt family.

It catalyses the reaction L-methionyl-tRNA(fMet) + (6R)-10-formyltetrahydrofolate = N-formyl-L-methionyl-tRNA(fMet) + (6S)-5,6,7,8-tetrahydrofolate + H(+). In terms of biological role, attaches a formyl group to the free amino group of methionyl-tRNA(fMet). The formyl group appears to play a dual role in the initiator identity of N-formylmethionyl-tRNA by promoting its recognition by IF2 and preventing the misappropriation of this tRNA by the elongation apparatus. The sequence is that of Methionyl-tRNA formyltransferase from Pseudomonas fluorescens (strain ATCC BAA-477 / NRRL B-23932 / Pf-5).